Consider the following 403-residue polypeptide: Prostaglandin E2 receptor EP1 subtype (403 aa).

Topologically, residues 1–38 (MSLCGPLNLSLAGEATPCAEPGAPNASAWPPSGRASAS) are extracellular. N-linked (GlcNAc...) asparagine glycosylation is found at asparagine 8 and asparagine 25. Residues 39–65 (PALPIFSMTLGAVSNVLALALLAQAAG) form a helical membrane-spanning segment. Residues 66 to 75 (RLRRRRSAAT) are Cytoplasmic-facing. A helical transmembrane segment spans residues 76-99 (FLLFVASLLATDLAGHVIPGALVL). Topologically, residues 100-114 (RLYAAGRSPAGGACH) are extracellular. The cysteines at positions 113 and 191 are disulfide-linked. The helical transmembrane segment at 115-136 (FLGGCMVFFGLCPLLLGCGMAV) threads the bilayer. Topologically, residues 137–158 (ERCVGVTRPLLHAARVSAARAR) are cytoplasmic. A helical membrane pass occupies residues 159 to 180 (LALAVLAALALAVALLPLARVG). At 181 to 204 (RYELQYPGTWCFIGLRPAGGWRQA) the chain is on the extracellular side. Residues 205–230 (LLAGLFAGLGLAALLAALVCNTLSGL) form a helical membrane-spanning segment. Residues 231–295 (ALLRARWRRR…ARRARAHDVE (65 aa)) are Cytoplasmic-facing. Residues 243–287 (RRRPQACGPDGRRHWGARAPRSASASSSSSVASVPGGSPGRGSAR) are disordered. Residues 259-278 (ARAPRSASASSSSSVASVPG) are compositionally biased toward low complexity. Residues 296-322 (MVGQLVGIMVVSCICWSPLLVLVVLAV) traverse the membrane as a helical segment. Residues 323 to 333 (GGWGSSSLQRP) are Extracellular-facing. The helical transmembrane segment at 334 to 355 (LFLAVRLASWNQILDPWVYILL) threads the bilayer. The Cytoplasmic segment spans residues 356 to 403 (RQAVLRQLLRLLPPRPGAKGSPAGLALTRSAWEASSLRSSRHSSLSHL).

The protein belongs to the G-protein coupled receptor 1 family.

The protein localises to the cell membrane. Its function is as follows. Receptor for prostaglandin E2 (PGE2). The activity of this receptor is mediated by G(q) proteins which activate a phosphatidylinositol-calcium second messenger system. May play a role as an important modulator of renal function. Implicated the smooth muscle contractile response to PGE2 in various tissues. The chain is Prostaglandin E2 receptor EP1 subtype (PTGER1) from Canis lupus familiaris (Dog).